A 131-amino-acid chain; its full sequence is Insertion element IS1 protein InsB (131 aa).

This sequence belongs to the transposase 27 family.

Absolutely required for transposition of IS1. This chain is Insertion element IS1 protein InsB (insB1), found in Shigella flexneri.